The chain runs to 118 residues: uncharacterized protein (118 aa).

The next 2 helical transmembrane spans lie at 5 to 25 (AFFNLIACVLFPTPLIPSMVI) and 40 to 57 (FLTFLTNLFLYNIVQHYI).

The protein localises to the membrane. This is an uncharacterized protein from African swine fever virus (strain Badajoz 1971 Vero-adapted) (Ba71V).